Reading from the N-terminus, the 393-residue chain is Dual-specificity RNA methyltransferase RlmN (393 aa).

Glutamate 114 acts as the Proton acceptor in catalysis. The 240-residue stretch at 120 to 359 (EGDRATLCVS…VIVRKTRGDD (240 aa)) folds into the Radical SAM core domain. Cysteine 127 and cysteine 364 are joined by a disulfide. [4Fe-4S] cluster-binding residues include cysteine 134, cysteine 138, and cysteine 141. S-adenosyl-L-methionine contacts are provided by residues 188 to 189 (GE), serine 220, 242 to 244 (SLH), and asparagine 321. The active-site S-methylcysteine intermediate is the cysteine 364.

The protein belongs to the radical SAM superfamily. RlmN family. The cofactor is [4Fe-4S] cluster.

The protein localises to the cytoplasm. It carries out the reaction adenosine(2503) in 23S rRNA + 2 reduced [2Fe-2S]-[ferredoxin] + 2 S-adenosyl-L-methionine = 2-methyladenosine(2503) in 23S rRNA + 5'-deoxyadenosine + L-methionine + 2 oxidized [2Fe-2S]-[ferredoxin] + S-adenosyl-L-homocysteine. The enzyme catalyses adenosine(37) in tRNA + 2 reduced [2Fe-2S]-[ferredoxin] + 2 S-adenosyl-L-methionine = 2-methyladenosine(37) in tRNA + 5'-deoxyadenosine + L-methionine + 2 oxidized [2Fe-2S]-[ferredoxin] + S-adenosyl-L-homocysteine. Functionally, specifically methylates position 2 of adenine 2503 in 23S rRNA and position 2 of adenine 37 in tRNAs. m2A2503 modification seems to play a crucial role in the proofreading step occurring at the peptidyl transferase center and thus would serve to optimize ribosomal fidelity. The polypeptide is Dual-specificity RNA methyltransferase RlmN (Haemophilus ducreyi (strain 35000HP / ATCC 700724)).